A 585-amino-acid polypeptide reads, in one-letter code: Probable G-protein coupled receptor Mth-like 10 (585 aa).

An N-terminal signal peptide occupies residues 1–32 (MPKKIHQPGGSLYCGVTLLGVLCLVVFRLIPG). Topologically, residues 33-250 (IPFGTYVMAE…DHSTVKIINS (218 aa)) are extracellular. Cystine bridges form between Cys56–Cys110, Cys112–Cys117, Cys121–Cys216, Cys122–Cys135, and Cys177–Cys236. N-linked (GlcNAc...) asparagine glycans are attached at residues Asn63 and Asn72. 5 N-linked (GlcNAc...) asparagine glycosylation sites follow: Asn142, Asn152, Asn157, Asn198, and Asn223. The chain crosses the membrane as a helical span at residues 251–271 (YAMMFSIPFMMLTIAVYLLIP). Residues 272 to 280 (ELRNQHGKS) lie on the Cytoplasmic side of the membrane. A helical membrane pass occupies residues 281–301 (LVCYLIGLSVGYSSLCYVQLY). Residues 302-312 (QVDATGVTCKV) lie on the Extracellular side of the membrane. The helical transmembrane segment at 313–333 (FGYTAYFFFMGAYMWLSVISF) threads the bilayer. At 334–353 (DLWHNFRGTRGINRFQEKKR) the chain is on the cytoplasmic side. A helical membrane pass occupies residues 354 to 374 (FLFYSLYSWGIALVFLAFTYC). The Extracellular segment spans residues 375–404 (AQQLTNLPANLKPGIGDGVYCWLDMSNWAA). Residues 405–425 (MIYFYGPILAIVVANTIMFIM) traverse the membrane as a helical segment. Residues 426-466 (TAIKIHGVQREMARIIASENSTKNLRTEKDKRFYRAWSNYR) are Cytoplasmic-facing. Residues 467–487 (FGLFLRLFLIMGITWLTELIS) traverse the membrane as a helical segment. Topologically, residues 488 to 498 (YFVGSDKGWSK) are extracellular. Residues 499–519 (LFYISDLANAMQGFLIFMLFV) traverse the membrane as a helical segment. The Cytoplasmic segment spans residues 520 to 585 (MKKKVKHLIT…VDPQKTTIFR (66 aa)).

Belongs to the G-protein coupled receptor 2 family. Mth subfamily.

Its subcellular location is the cell membrane. The chain is Probable G-protein coupled receptor Mth-like 10 (mthl10) from Drosophila melanogaster (Fruit fly).